The sequence spans 278 residues: Bifunctional protein FolD (278 aa).

Residues Gly164–Ser166 and Thr228 each bind NADP(+).

The protein belongs to the tetrahydrofolate dehydrogenase/cyclohydrolase family. Homodimer.

It carries out the reaction (6R)-5,10-methylene-5,6,7,8-tetrahydrofolate + NADP(+) = (6R)-5,10-methenyltetrahydrofolate + NADPH. The catalysed reaction is (6R)-5,10-methenyltetrahydrofolate + H2O = (6R)-10-formyltetrahydrofolate + H(+). It participates in one-carbon metabolism; tetrahydrofolate interconversion. In terms of biological role, catalyzes the oxidation of 5,10-methylenetetrahydrofolate to 5,10-methenyltetrahydrofolate and then the hydrolysis of 5,10-methenyltetrahydrofolate to 10-formyltetrahydrofolate. This chain is Bifunctional protein FolD, found in Mycoplasmopsis synoviae (strain 53) (Mycoplasma synoviae).